The primary structure comprises 239 residues: UPF0173 metal-dependent hydrolase Msm_0779 (239 aa).

It belongs to the UPF0173 family.

The chain is UPF0173 metal-dependent hydrolase Msm_0779 from Methanobrevibacter smithii (strain ATCC 35061 / DSM 861 / OCM 144 / PS).